Here is a 33-residue protein sequence, read N- to C-terminus: uncharacterized protein (33 aa).

A disordered region spans residues 1–33 (MGSVIKKRRKRMSKKKHRKLLRRTRVQRRKLGK).

This is an uncharacterized protein from Mycobacterium tuberculosis (strain CDC 1551 / Oshkosh).